Here is a 642-residue protein sequence, read N- to C-terminus: Uromodulin (642 aa).

An N-terminal signal peptide occupies residues 1 to 24; sequence MGIPLTWMLLVMMVTSWFTLAEAS. N-linked (GlcNAc...) asparagine glycans are attached at residues N25 and N38. The EGF-like 1 domain occupies 28-64; it reads EARRCSECHNNATCTVDGVVTTCSCQTGFTGDGLVCE. Disulfide bonds link C32–C41, C35–C50, C52–C63, C69–C82, C77–C91, C93–C105, C111–C125, C119–C134, C136–C147, C149–C160, C154–C171, C175–C268, C196–C283, C218–C256, C224–C288, C249–C257, C298–C307, C301–C316, C318–C348, C336–C426, and C367–C390. The region spanning 65–106 is the EGF-like 2; calcium-binding domain; it reads DMDECATPWTHNCSNSSCVNTPGSFKCSCQDGFRLTPELSCT. Residues N76 and N79 are each glycosylated (N-linked (GlcNAc...) asparagine). The EGF-like 3; calcium-binding domain occupies 107–148; the sequence is DVDECSEQGLSNCHALATCVNTEGDYLCVCPEGFTGDGWYCE. The tract at residues 149–172 is beta hairpin; sequence CSPGSCEPGLDCLPQGPDGKLVCQ. Residues 173–292 form a D10C region; that stretch reads DPCNTYETLT…CNLAYCTDPS (120 aa). N-linked (GlcNAc...) asparagine glycosylation is present at N233. The N-linked (GlcNAc...) asparagine glycan is linked to N276. Residues 293–324 enclose the EGF-like 4 domain; that stretch reads SVEGTCEECRVDEDCISDNGRWRCQCKQDSNI. An N-linked (GlcNAc...) asparagine glycan is attached at N323. Residues 335 to 430 form a ZP-N region; sequence ECGANDIKMS…RMNFECSYPL (96 aa). Residues 335–590 enclose the ZP domain; that stretch reads ECGANDIKMS…PTCSGTRFRS (256 aa). 2 N-linked (GlcNAc...) asparagine glycosylation sites follow: N397 and N448. Residues 431 to 454 are flexible ZP-N/ZP-C linker; important for secretion and polymerization into filaments; sequence DMKVSLKTSLQPMVSALNISLGGT. The interval 455-465 is internal hydrophobic patch (IHP); that stretch reads GKFTVRMALFQ. Residues 455–590 are ZP-C; it reads GKFTVRMALF…PTCSGTRFRS (136 aa). 3 cysteine pairs are disulfide-bonded: C507/C567, C528/C583, and C572/C579. A glycan (N-linked (GlcNAc...) asparagine) is linked at N514. Residues 587-590 form an essential for cleavage by HPN region; sequence RFRS. Residues 599 to 607 are external hydrophobic patch (EHP); regulates polymerization into filaments; sequence VLNLGPITR. A618 is lipidated: GPI-anchor amidated alanine. The propeptide at 619–642 is removed in mature form; the sequence is SSNLRLLSIWLLLFPSATLIFMVQ.

As to quaternary structure, homodimer that then polymerizes into long filaments. The filaments can additionally assemble laterally to form a sheet. The filaments consist of a zigzag-shaped backbone with laterally protruding arms which interact with bacterial adhesin fimH. Two fimH molecules can bind to a single UMOD monomer. Post-translationally, N-glycosylated. Proteolytically cleaved at a conserved C-terminal proteolytic cleavage site to generate the secreted form found in urine. This cleavage is catalyzed by HPN. As to expression, detected in urine (secreted form). Detected in kidney thick ascending limb epithelial cells (at protein level).

The protein resides in the secreted. It is found in the apical cell membrane. The protein localises to the basolateral cell membrane. Its subcellular location is the cell projection. It localises to the cilium membrane. In terms of biological role, functions in biogenesis and organization of the apical membrane of epithelial cells of the thick ascending limb of Henle's loop (TALH), where it promotes formation of complex filamentous gel-like structure that may play a role in the water barrier permeability. May serve as a receptor for binding and endocytosis of cytokines (IL-1, IL-2) and TNF. Facilitates neutrophil migration across renal epithelia. Functionally, in the urine, may contribute to colloid osmotic pressure, retards passage of positively charged electrolytes and inhibits formation of liquid containing supersaturated salts and subsequent formation of salt crystals. Protects against urinary tract infections by binding to type 1 fimbriated E.coli. Binds to the bacterial adhesin fimH which mediates the stable formation of bacterial aggregates, prevents the binding of E.coli to uroplakins UPK1A and UPK1B which act as urothelial receptors for type I fimbriae, and allows for pathogen clearance through micturation. Also promotes aggregation of other bacteria including K.pneumoniae, P.aeruginosa and S.mitis and so may also protect against other uropathogens. The polypeptide is Uromodulin (Umod) (Mus musculus (Mouse)).